The following is a 156-amino-acid chain: Small ribosomal subunit protein uS7 (156 aa).

Belongs to the universal ribosomal protein uS7 family. Part of the 30S ribosomal subunit. Contacts proteins S9 and S11.

Functionally, one of the primary rRNA binding proteins, it binds directly to 16S rRNA where it nucleates assembly of the head domain of the 30S subunit. Is located at the subunit interface close to the decoding center, probably blocks exit of the E-site tRNA. In Synechococcus sp. (strain WH7803), this protein is Small ribosomal subunit protein uS7.